The sequence spans 534 residues: Peptide chain release factor 3 (534 aa).

Positions 9–278 (ARRRTFAIIS…FFIEHAPPPQ (270 aa)) constitute a tr-type G domain. GTP contacts are provided by residues 18 to 25 (SHPDAGKT), 86 to 90 (DTPGH), and 140 to 143 (NKLD).

This sequence belongs to the TRAFAC class translation factor GTPase superfamily. Classic translation factor GTPase family. PrfC subfamily.

It localises to the cytoplasm. In terms of biological role, increases the formation of ribosomal termination complexes and stimulates activities of RF-1 and RF-2. It binds guanine nucleotides and has strong preference for UGA stop codons. It may interact directly with the ribosome. The stimulation of RF-1 and RF-2 is significantly reduced by GTP and GDP, but not by GMP. This Xanthomonas oryzae pv. oryzae (strain MAFF 311018) protein is Peptide chain release factor 3.